We begin with the raw amino-acid sequence, 471 residues long: Siroheme synthase (471 aa).

Residues 1–203 (MDYLPLFADI…GDWESAEKTL (203 aa)) form a precorrin-2 dehydrogenase /sirohydrochlorin ferrochelatase region. NAD(+) contacts are provided by residues 22-23 (EV) and 43-44 (KN). Residue S128 is modified to Phosphoserine. The tract at residues 215–471 (GEIILVGAGP…DTKSSLINLA (257 aa)) is uroporphyrinogen-III C-methyltransferase. P224 contacts S-adenosyl-L-methionine. D247 (proton acceptor) is an active-site residue. K269 (proton donor) is an active-site residue. S-adenosyl-L-methionine-binding positions include 300–302 (GGD), I305, 330–331 (TA), M382, and A411.

The protein in the N-terminal section; belongs to the precorrin-2 dehydrogenase / sirohydrochlorin ferrochelatase family. This sequence in the C-terminal section; belongs to the precorrin methyltransferase family.

It carries out the reaction uroporphyrinogen III + 2 S-adenosyl-L-methionine = precorrin-2 + 2 S-adenosyl-L-homocysteine + H(+). It catalyses the reaction precorrin-2 + NAD(+) = sirohydrochlorin + NADH + 2 H(+). The catalysed reaction is siroheme + 2 H(+) = sirohydrochlorin + Fe(2+). It functions in the pathway cofactor biosynthesis; adenosylcobalamin biosynthesis; precorrin-2 from uroporphyrinogen III: step 1/1. It participates in cofactor biosynthesis; adenosylcobalamin biosynthesis; sirohydrochlorin from precorrin-2: step 1/1. Its pathway is porphyrin-containing compound metabolism; siroheme biosynthesis; precorrin-2 from uroporphyrinogen III: step 1/1. The protein operates within porphyrin-containing compound metabolism; siroheme biosynthesis; siroheme from sirohydrochlorin: step 1/1. It functions in the pathway porphyrin-containing compound metabolism; siroheme biosynthesis; sirohydrochlorin from precorrin-2: step 1/1. Multifunctional enzyme that catalyzes the SAM-dependent methylations of uroporphyrinogen III at position C-2 and C-7 to form precorrin-2 via precorrin-1. Then it catalyzes the NAD-dependent ring dehydrogenation of precorrin-2 to yield sirohydrochlorin. Finally, it catalyzes the ferrochelation of sirohydrochlorin to yield siroheme. This chain is Siroheme synthase, found in Zymomonas mobilis subsp. mobilis (strain ATCC 31821 / ZM4 / CP4).